We begin with the raw amino-acid sequence, 245 residues long: Geranylgeranylglyceryl phosphate synthase (245 aa).

Mg(2+) contacts are provided by aspartate 22 and serine 51. Sn-glycerol 1-phosphate-binding positions include 169 to 175 (YLEAGSG), 200 to 201 (GG), and 222 to 223 (GT).

The protein belongs to the GGGP/HepGP synthase family. Group II subfamily. In terms of assembly, homopentamer. Requires Mg(2+) as cofactor.

Its subcellular location is the cytoplasm. It carries out the reaction sn-glycerol 1-phosphate + (2E,6E,10E)-geranylgeranyl diphosphate = sn-3-O-(geranylgeranyl)glycerol 1-phosphate + diphosphate. The protein operates within membrane lipid metabolism; glycerophospholipid metabolism. Inhibited by EDTA in vitro. Its function is as follows. Prenyltransferase that catalyzes the transfer of the geranylgeranyl moiety of geranylgeranyl diphosphate (GGPP) to the C3 hydroxyl of sn-glycerol-1-phosphate (G1P). This reaction is the first ether-bond-formation step in the biosynthesis of archaeal membrane lipids. Cannot use sn-glycerol-3-phosphate (G3P) or dihydroxyacetonephosphate (DHAP) as substrate. This chain is Geranylgeranylglyceryl phosphate synthase, found in Methanothermobacter marburgensis (strain ATCC BAA-927 / DSM 2133 / JCM 14651 / NBRC 100331 / OCM 82 / Marburg) (Methanobacterium thermoautotrophicum).